Here is a 341-residue protein sequence, read N- to C-terminus: Antihemorrhagic factor BJ46a (341 aa).

The N-terminal stretch at Met-1–Ser-19 is a signal peptide. Cystatin fetuin-A-type domains follow at residues Val-22–His-130 and Arg-141–Val-254. The short motif at Arg-23–Asp-25 is the Cell attachment site element. Disulfide bonds link Cys-28–Cys-332, Cys-85–Cys-96, Cys-110–Cys-129, Cys-143–Cys-146, Cys-205–Cys-217, and Cys-230–Cys-253. A glycan (N-linked (GlcNAc...) asparagine) is linked at Asn-95. Residue Asn-204 is glycosylated (N-linked (GlcNAc...) asparagine). N-linked (GlcNAc...) asparagine glycans are attached at residues Asn-282 and Asn-293.

As to quaternary structure, homodimer. In terms of tissue distribution, expressed by the liver.

The protein localises to the secreted. Functionally, potent inhibitor of hemorrhagic activity but also proteolytic activities of atrolysin C and jararhagin. Inhibition occurs by formation of a non-covalent complex between BJ46a and the proteinases at their metalloproteinase domains. This Bothrops jararaca (Jararaca) protein is Antihemorrhagic factor BJ46a.